A 1827-amino-acid chain; its full sequence is Sucrase-isomaltase, intestinal (1827 aa).

Residues 2–12 (AKRKFSGLEIT) lie on the Cytoplasmic side of the membrane. Ser7 carries the phosphoserine; by PKA modification. A helical; Signal-anchor for type II membrane protein membrane pass occupies residues 13–32 (LIVLFVIVFIIAIALIAVLA). The Lumenal segment spans residues 33–1827 (TKTPAVEEVN…LDDPIEISWS (1795 aa)). Positions 39 to 64 (EEVNPSSSTPTTTSTTTSTSGSVSCP) are disordered. Over residues 43–64 (PSSSTPTTTSTTTSTSGSVSCP) the composition is skewed to low complexity. The P-type 1 domain maps to 61-110 (VSCPSELNEVVNERINCIPEQSPTQAICAQRNCCWRPWNNSDIPWCFFVD). Disulfide bonds link Cys63-Cys94, Cys77-Cys93, and Cys88-Cys106. Asn99 is a glycosylation site (N-linked (GlcNAc...) asparagine). Positions 110-1007 (DNHGYNVEGM…DLQLNPTRTR (898 aa)) are isomaltase. 2 residues coordinate substrate: Asp264 and Asp388. Sulfotyrosine occurs at positions 391 and 400. A glycan (N-linked (GlcNAc...) asparagine) is linked at Asn455. The active-site Nucleophile; for isomaltase activity is Asp505. The cysteines at positions 520 and 545 are disulfide-linked. Residue Arg588 participates in substrate binding. Asp604 serves as the catalytic For isomaltase activity. A disulfide bridge connects residues Cys635 and Cys646. His662 serves as a coordination point for substrate. N-linked (GlcNAc...) asparagine glycans are attached at residues Asn859, Asn896, and Asn904. In terms of domain architecture, P-type 2 spans 932-978 (DQTFLESEKITCYPDADIATQEKCTQRGCIWDTNTVNPRAPECYFPK). Positions 1008–1827 (ITLPSEPITN…LDDPIEISWS (820 aa)) are sucrase. Residues Asn1235, Asn1303, Asn1325, Asn1340, Asn1354, and Asn1368 are each glycosylated (N-linked (GlcNAc...) asparagine). 2 positions are modified to sulfotyrosine: Tyr1382 and Tyr1385. The Nucleophile; for sucrase activity role is filled by Asp1394. Glu1397 (for sucrase activity) is an active-site residue. Asn1403 carries N-linked (GlcNAc...) asparagine glycosylation. The Proton donor; for sucrase activity role is filled by Asp1500. N-linked (GlcNAc...) asparagine glycans are attached at residues Asn1535, Asn1572, Asn1748, Asn1763, and Asn1799.

The protein belongs to the glycosyl hydrolase 31 family. As to quaternary structure, the resulting sucrase and isomaltase subunits stay associated with one another in a complex by non-covalent linkages. In terms of processing, the precursor is proteolytically cleaved when exposed to pancreatic proteases in the intestinal lumen. Post-translationally, N- and O-glycosylated. Sulfated.

It localises to the apical cell membrane. It catalyses the reaction Hydrolysis of sucrose and maltose by an alpha-D-glucosidase-type action.. The catalysed reaction is Hydrolysis of (1-&gt;6)-alpha-D-glucosidic linkages in some oligosaccharides produced from starch and glycogen by alpha-amylase, and in isomaltose.. Its function is as follows. Plays an important role in the final stage of carbohydrate digestion. Isomaltase activity is specific for both alpha-1,4- and alpha-1,6-oligosaccharides. In Oryctolagus cuniculus (Rabbit), this protein is Sucrase-isomaltase, intestinal (SI).